A 97-amino-acid polypeptide reads, in one-letter code: Small integral membrane protein 8 (97 aa).

Positions 1 to 24 are disordered; that stretch reads MSSAPEPPTFKKEPPKEKEFQSPG. Basic and acidic residues predominate over residues 9–20; the sequence is TFKKEPPKEKEF. A helical membrane pass occupies residues 48–70; that stretch reads PVMAFGLVTLSLCVAYIGYLHAI.

Belongs to the SMIM8 family.

The protein localises to the membrane. The protein is Small integral membrane protein 8 (SMIM8) of Homo sapiens (Human).